The following is a 440-amino-acid chain: Thymidine phosphorylase (440 aa).

It belongs to the thymidine/pyrimidine-nucleoside phosphorylase family. In terms of assembly, homodimer.

It catalyses the reaction thymidine + phosphate = 2-deoxy-alpha-D-ribose 1-phosphate + thymine. It participates in pyrimidine metabolism; dTMP biosynthesis via salvage pathway; dTMP from thymine: step 1/2. In terms of biological role, the enzymes which catalyze the reversible phosphorolysis of pyrimidine nucleosides are involved in the degradation of these compounds and in their utilization as carbon and energy sources, or in the rescue of pyrimidine bases for nucleotide synthesis. The protein is Thymidine phosphorylase of Erwinia tasmaniensis (strain DSM 17950 / CFBP 7177 / CIP 109463 / NCPPB 4357 / Et1/99).